The chain runs to 258 residues: Phosphate import ATP-binding protein PstB (258 aa).

One can recognise an ABC transporter domain in the interval 5–247; sequence LDLKGVNIYY…EKIFSNPTEK (243 aa). Residue 37 to 44 coordinates ATP; it reads GASGCGKT.

This sequence belongs to the ABC transporter superfamily. Phosphate importer (TC 3.A.1.7) family. The complex is composed of two ATP-binding proteins (PstB), two transmembrane proteins (PstC and PstA) and a solute-binding protein (PstS).

Its subcellular location is the cell membrane. The enzyme catalyses phosphate(out) + ATP + H2O = ADP + 2 phosphate(in) + H(+). Part of the ABC transporter complex PstSACB involved in phosphate import. Responsible for energy coupling to the transport system. The polypeptide is Phosphate import ATP-binding protein PstB (Mycobacterium leprae (strain TN)).